Consider the following 436-residue polypeptide: ATP-dependent RNA helicase RhlB (436 aa).

A Q motif motif is present at residues 9–37; the sequence is QKFADFPLHKEVHQALNEAGFEFCTPIQA. The region spanning 40 to 219 is the Helicase ATP-binding domain; sequence LPILLEKKDI…YDHMNEPEKV (180 aa). 53–60 lines the ATP pocket; it reads AQTGTGKT. The DEAD box motif lies at 165-168; sequence DEAD. Positions 243-390 constitute a Helicase C-terminal domain; sequence KMPLLLSLLE…VTSYDSDALL (148 aa). A disordered region spans residues 392–436; it reads DIPPPVRIHRKPSTHTRNTRDRGASRPQGGQRSGPRRHDRTRRHS. The segment covering 425 to 436 has biased composition (basic residues); it reads GPRRHDRTRRHS.

Belongs to the DEAD box helicase family. RhlB subfamily. In terms of assembly, component of the RNA degradosome, which is a multiprotein complex involved in RNA processing and mRNA degradation.

It is found in the cytoplasm. The enzyme catalyses ATP + H2O = ADP + phosphate + H(+). Functionally, DEAD-box RNA helicase involved in RNA degradation. Has RNA-dependent ATPase activity and unwinds double-stranded RNA. The sequence is that of ATP-dependent RNA helicase RhlB from Shewanella halifaxensis (strain HAW-EB4).